A 508-amino-acid polypeptide reads, in one-letter code: Light-independent protochlorophyllide reductase subunit B (508 aa).

Aspartate 36 is a binding site for [4Fe-4S] cluster. Aspartate 294 acts as the Proton donor in catalysis. 429-430 (GM) contributes to the substrate binding site.

The protein belongs to the ChlB/BchB/BchZ family. As to quaternary structure, protochlorophyllide reductase is composed of three subunits; ChlL, ChlN and ChlB. Forms a heterotetramer of two ChlB and two ChlN subunits. [4Fe-4S] cluster serves as cofactor.

The enzyme catalyses chlorophyllide a + oxidized 2[4Fe-4S]-[ferredoxin] + 2 ADP + 2 phosphate = protochlorophyllide a + reduced 2[4Fe-4S]-[ferredoxin] + 2 ATP + 2 H2O. Its pathway is porphyrin-containing compound metabolism; chlorophyll biosynthesis (light-independent). Functionally, component of the dark-operative protochlorophyllide reductase (DPOR) that uses Mg-ATP and reduced ferredoxin to reduce ring D of protochlorophyllide (Pchlide) to form chlorophyllide a (Chlide). This reaction is light-independent. The NB-protein (ChlN-ChlB) is the catalytic component of the complex. The protein is Light-independent protochlorophyllide reductase subunit B of Nostoc sp. (strain PCC 7120 / SAG 25.82 / UTEX 2576).